The primary structure comprises 363 residues: 3-isopropylmalate dehydrogenase (363 aa).

78 to 89 (GPKWGTGAVRPE) contacts NAD(+). Residues arginine 96, arginine 106, arginine 135, and aspartate 224 each contribute to the substrate site. The Mg(2+) site is built by aspartate 224, aspartate 249, and aspartate 253. 288–299 (GSAPDLPANKVN) provides a ligand contact to NAD(+).

It belongs to the isocitrate and isopropylmalate dehydrogenases family. As to quaternary structure, homodimer. Mg(2+) serves as cofactor. Requires Mn(2+) as cofactor.

The protein localises to the cytoplasm. It catalyses the reaction (2R,3S)-3-isopropylmalate + NAD(+) = 4-methyl-2-oxopentanoate + CO2 + NADH. Its pathway is amino-acid biosynthesis; L-leucine biosynthesis; L-leucine from 3-methyl-2-oxobutanoate: step 3/4. Its function is as follows. Catalyzes the oxidation of 3-carboxy-2-hydroxy-4-methylpentanoate (3-isopropylmalate) to 3-carboxy-4-methyl-2-oxopentanoate. The product decarboxylates to 4-methyl-2 oxopentanoate. The sequence is that of 3-isopropylmalate dehydrogenase (LEU2) from Cyberlindnera jadinii (Torula yeast).